The following is a 295-amino-acid chain: Phosphoserine phosphatase, chloroplastic (295 aa).

The transit peptide at 1 to 54 directs the protein to the chloroplast; that stretch reads MEALTTSRVVPVQVPCRKLSSLFANFSCLELRRYPCRGLVSIMNHPKLLRPVTA. Residue D89 is the Nucleophile of the active site. Residues D89 and D91 each contribute to the Mg(2+) site. D91 acts as the Proton donor in catalysis. Substrate-binding positions include E98, R134, 178–179, and K227; that span reads SG. Position 248 (D248) interacts with Mg(2+).

The protein belongs to the HAD-like hydrolase superfamily. SerB family. The cofactor is Mg(2+). In terms of tissue distribution, ubiquitous. Mainly expressed in shoot and root meristems, vasculature, pollen, anthers, carpels and seeds.

Its subcellular location is the plastid. The protein resides in the chloroplast. The catalysed reaction is O-phospho-L-serine + H2O = L-serine + phosphate. It carries out the reaction O-phospho-D-serine + H2O = D-serine + phosphate. The protein operates within amino-acid biosynthesis; L-serine biosynthesis; L-serine from 3-phospho-D-glycerate: step 3/3. Its activity is regulated as follows. Approximately 60% inhibition of PSP activity is observed in presence of 10 mM serine. Its function is as follows. Catalyzes the last step in the plastidial phosphorylated pathway of serine biosynthesis (PPSB). The reaction mechanism proceeds via the formation of a phosphoryl-enzyme intermediates. Required for embryo, pollen and root development. May be required preferentially for serine biosynthesis in non-photosynthetic tissues. This chain is Phosphoserine phosphatase, chloroplastic (PSP), found in Arabidopsis thaliana (Mouse-ear cress).